Consider the following 263-residue polypeptide: Putative S-adenosyl-L-methionine-dependent methyltransferase Mjls_0079 (263 aa).

S-adenosyl-L-methionine contacts are provided by residues aspartate 121 and 150–151 (ES).

It belongs to the UPF0677 family.

In terms of biological role, exhibits S-adenosyl-L-methionine-dependent methyltransferase activity. The polypeptide is Putative S-adenosyl-L-methionine-dependent methyltransferase Mjls_0079 (Mycobacterium sp. (strain JLS)).